Here is a 300-residue protein sequence, read N- to C-terminus: Probable alpha-L-glutamate ligase (300 aa).

The 184-residue stretch at 104-287 (LQLLARQGID…IAGRMIQWIE (184 aa)) folds into the ATP-grasp domain. Residues K141, 178–179 (EY), D187, and 211–213 (RSN) contribute to the ATP site. Mg(2+) is bound by residues D248, E260, and N262. Residues D248, E260, and N262 each coordinate Mn(2+).

The protein belongs to the RimK family. The cofactor is Mg(2+). It depends on Mn(2+) as a cofactor.

This is Probable alpha-L-glutamate ligase from Citrobacter koseri (strain ATCC BAA-895 / CDC 4225-83 / SGSC4696).